A 235-amino-acid chain; its full sequence is Phosphoribosylaminoimidazole-succinocarboxamide synthase (235 aa).

This sequence belongs to the SAICAR synthetase family.

It carries out the reaction 5-amino-1-(5-phospho-D-ribosyl)imidazole-4-carboxylate + L-aspartate + ATP = (2S)-2-[5-amino-1-(5-phospho-beta-D-ribosyl)imidazole-4-carboxamido]succinate + ADP + phosphate + 2 H(+). It participates in purine metabolism; IMP biosynthesis via de novo pathway; 5-amino-1-(5-phospho-D-ribosyl)imidazole-4-carboxamide from 5-amino-1-(5-phospho-D-ribosyl)imidazole-4-carboxylate: step 1/2. The polypeptide is Phosphoribosylaminoimidazole-succinocarboxamide synthase (Streptococcus agalactiae serotype Ia (strain ATCC 27591 / A909 / CDC SS700)).